The primary structure comprises 1171 residues: Structural maintenance of chromosomes protein 2-2 (1171 aa).

Positions 2–1158 (HIKEICLEGF…DVLFRTKFVD (1157 aa)) constitute a Zinc-hook domain. 32-39 (GLNGSGKS) serves as a coordination point for ATP. A coiled-coil region spans residues 172-510 (RMYENKKEAA…LANVQFTYRD (339 aa)). Residues 518–635 (SKVKGVVAKL…KTTDAAKEVA (118 aa)) enclose the SMC hinge domain. The stretch at 674-1026 (HDLAEAETKF…LDEKKKETLK (353 aa)) forms a coiled coil.

Belongs to the SMC family. SMC2 subfamily. Forms a heterodimer with SMC4. Component of the condensin complex, which contains the SMC2 and SMC4 heterodimer, and three non SMC subunits that probably regulate the complex: CAPH, CAPD2 and CAPG. In terms of tissue distribution, highly expressed in roots and young floral buds.

It localises to the nucleus. In terms of biological role, central component of the condensin complex, a complex required for conversion of interphase chromatin into mitotic-like condense chromosomes. The condensin complex probably introduces positive supercoils into relaxed DNA in the presence of type I topoisomerases and converts nicked DNA into positive knotted forms in the presence of type II topoisomerases. Also involved in chromosome segregation in meiosis. The protein is Structural maintenance of chromosomes protein 2-2 (SMC2-2) of Arabidopsis thaliana (Mouse-ear cress).